Reading from the N-terminus, the 134-residue chain is MKRKYRRLFVVIITLSIFAGSVVLVLGKLKNNVSFFYTPTELLSSSLINRPNIRIGGMVVKGTVQKYDDSIVFHITDLKNYIKVVYKGILPPLFSEGSWIVAKGKMVNGKFIASEILAKHDENYMPNKYKTNDL.

The Cytoplasmic segment spans residues 1-7 (MKRKYRR). The helical; Signal-anchor for type II membrane protein transmembrane segment at 8–28 (LFVVIITLSIFAGSVVLVLGK) threads the bilayer. Residues 29–134 (LKNNVSFFYT…MPNKYKTNDL (106 aa)) lie on the Periplasmic side of the membrane. Histidine 120 and tyrosine 124 together coordinate heme.

This sequence belongs to the CcmE/CycJ family.

The protein localises to the cell inner membrane. Heme chaperone required for the biogenesis of c-type cytochromes. Transiently binds heme delivered by CcmC and transfers the heme to apo-cytochromes in a process facilitated by CcmF and CcmH. In Ehrlichia ruminantium (strain Welgevonden), this protein is Cytochrome c-type biogenesis protein CcmE.